The chain runs to 190 residues: Imidazoleglycerol-phosphate dehydratase (190 aa).

Belongs to the imidazoleglycerol-phosphate dehydratase family.

Its subcellular location is the cytoplasm. It carries out the reaction D-erythro-1-(imidazol-4-yl)glycerol 3-phosphate = 3-(imidazol-4-yl)-2-oxopropyl phosphate + H2O. Its pathway is amino-acid biosynthesis; L-histidine biosynthesis; L-histidine from 5-phospho-alpha-D-ribose 1-diphosphate: step 6/9. The sequence is that of Imidazoleglycerol-phosphate dehydratase from Campylobacter hominis (strain ATCC BAA-381 / DSM 21671 / CCUG 45161 / LMG 19568 / NCTC 13146 / CH001A).